A 332-amino-acid chain; its full sequence is UPF0194 membrane protein YbhG (332 aa).

Positions 1-16 (MMKKPVVIGLAVVVLA) are cleaved as a signal peptide. Positions 108 to 211 (EEIAQAAAAV…LQDSTLVAPS (104 aa)) form a coiled coil.

The protein belongs to the UPF0194 family.

Its subcellular location is the periplasm. This chain is UPF0194 membrane protein YbhG, found in Escherichia coli O6:H1 (strain CFT073 / ATCC 700928 / UPEC).